Here is a 910-residue protein sequence, read N- to C-terminus: Importin subunit beta-2 (910 aa).

HEAT repeat units follow at residues 12–39 (VLVELSEVIKNSLSENSQTRNAALNLLE), 44–82 (IPDLNNYLTCILINATELSVSIRSAAGLLLKNNVRVSSL), 93–126 (YTKSTVIRGLCDPEQLIRGISGNVITTIISRWGI), 132–169 (VLPQLMEMLSSPASTTQEGAFSALTKICEDSAQELDRD), 177–207 (DFMIPRFIELARHENPKIRTDALFCLNQFVL), 220–247 (FLETCYALATDVSPNVRKNVCQALVYLL), 259–286 (GSIVEYMLYSTQDSDQNVALEACEFWLA), 302–406 (DKIV…LSSF), 414–442 (IILPHLKQSLTSEDWKVQEAGVLAVGAIA), 454–481 (PELYPYFLSLLDSKKPLVRTITCWTLGR), 499–532 (FVPLLQGLLRMVVDNNKKVQEAGCSAFAILEEQA), 540–573 (LEPILTNLAFAFQKYQRKNVLILYDAVQTLADYV), 581–619 (RYIELLITPLLQKWSMIPDDDPNLFPLFECLSSVAVALR), 627–677 (AETY…ALGS), 690–721 (LGQIIGICAKDEVPEVRQSAYALLGDMCMYCF), 729–764 (DALLVDMLPQMQLPLLHVSASNNAIWSAGEMALQLG), 772–807 (KPLLERLICILKSKKSNTTVLENVAITIGRLGVYNP), 815–848 (ELFYQPWFEIIKTVGENEEKDSAFRGFCNILACN), and 857–888 (PMFVLCVAEYENPSAELRDMFQKILQGSVELF). The 89-residue stretch at 34–122 (ALNLLEKAKD…SGNVITTIIS (89 aa)) folds into the Importin N-terminal domain. A disordered region spans residues 333 to 381 (DREEDIRPQHAKGKSRITLNTQGPITQQGSSNADADELEDEDEDDDEFD). Over residues 349 to 364 (ITLNTQGPITQQGSSN) the composition is skewed to polar residues. The span at 366–381 (DADELEDEDEDDDEFD) shows a compositional bias: acidic residues.

Belongs to the importin beta family. Importin beta-2 subfamily. Interacts with Ran; interacts specifically with the GTP-bound form of Ran (GTP-Ran), protecting it from GTP hydrolysis and nucleotide exchange. Interacts with nucleoporins.

The protein localises to the cytoplasm. It localises to the nucleus envelope. Functions in nuclear protein import as nuclear transport receptor. Serves as receptor for arginine/glycine-rich nuclear localization signals (rg-NLS) and PY-NLS in cargo substrates. Its predominant cargo substrate seems to be mRNA-binding proteins. Mediates docking of the importin/substrate complex to the nuclear pore complex (NPC) through binding to repeat-containing nucleoporins. The complex is subsequently translocated through the pore by an energy requiring, Ran-dependent mechanism. At the nucleoplasmic side of the NPC, GTP-Ran binding leads to release of the cargo. The importin is re-exported from the nucleus to the cytoplasm where GTP hydrolysis releases Ran from importin. The directionality of nuclear import is thought to be conferred by an asymmetric distribution of the GTP- and GDP-bound forms of Ran between the cytoplasm and nucleus. This is Importin subunit beta-2 from Schizosaccharomyces pombe (strain 972 / ATCC 24843) (Fission yeast).